A 64-amino-acid polypeptide reads, in one-letter code: Large ribosomal subunit protein uL30 (64 aa).

Belongs to the universal ribosomal protein uL30 family. As to quaternary structure, part of the 50S ribosomal subunit.

This is Large ribosomal subunit protein uL30 from Beijerinckia indica subsp. indica (strain ATCC 9039 / DSM 1715 / NCIMB 8712).